A 763-amino-acid polypeptide reads, in one-letter code: 5-methyltetrahydropteroyltriglutamate--homocysteine methyltransferase (763 aa).

5-methyltetrahydropteroyltri-L-glutamate is bound by residues 16–19 (RELK) and Lys117. Residues 438-440 (IGS) and Glu491 each bind L-homocysteine. Residues 438-440 (IGS) and Glu491 each bind L-methionine. 5-methyltetrahydropteroyltri-L-glutamate is bound by residues 522–523 (RC) and Trp568. Asp606 contacts L-homocysteine. Asp606 contacts L-methionine. Position 612 (Glu612) interacts with 5-methyltetrahydropteroyltri-L-glutamate. Zn(2+) contacts are provided by His648, Cys650, and Glu672. His701 (proton donor) is an active-site residue. Cys733 is a Zn(2+) binding site.

This sequence belongs to the vitamin-B12 independent methionine synthase family. The cofactor is Zn(2+).

It carries out the reaction 5-methyltetrahydropteroyltri-L-glutamate + L-homocysteine = tetrahydropteroyltri-L-glutamate + L-methionine. Its pathway is amino-acid biosynthesis; L-methionine biosynthesis via de novo pathway; L-methionine from L-homocysteine (MetE route): step 1/1. Functionally, catalyzes the transfer of a methyl group from 5-methyltetrahydrofolate to homocysteine resulting in methionine formation. The polypeptide is 5-methyltetrahydropteroyltriglutamate--homocysteine methyltransferase (Pseudomonas paraeruginosa (strain DSM 24068 / PA7) (Pseudomonas aeruginosa (strain PA7))).